Here is a 322-residue protein sequence, read N- to C-terminus: Uracil-DNA glycosylase (322 aa).

Asp-142 (proton acceptor) is an active-site residue.

The protein belongs to the uracil-DNA glycosylase (UDG) superfamily. UNG family.

It localises to the mitochondrion. The protein localises to the nucleus. The catalysed reaction is Hydrolyzes single-stranded DNA or mismatched double-stranded DNA and polynucleotides, releasing free uracil.. Functionally, excises uracil residues from the DNA which can arise as a result of misincorporation of dUMP residues by DNA polymerase or due to deamination of cytosine. In Schizosaccharomyces pombe (strain 972 / ATCC 24843) (Fission yeast), this protein is Uracil-DNA glycosylase (ung1).